A 185-amino-acid chain; its full sequence is Ribose 1,5-bisphosphate phosphokinase PhnN (185 aa).

13 to 20 (GPSGAGKD) is an ATP binding site.

Belongs to the ribose 1,5-bisphosphokinase family.

It carries out the reaction alpha-D-ribose 1,5-bisphosphate + ATP = 5-phospho-alpha-D-ribose 1-diphosphate + ADP. The protein operates within metabolic intermediate biosynthesis; 5-phospho-alpha-D-ribose 1-diphosphate biosynthesis; 5-phospho-alpha-D-ribose 1-diphosphate from D-ribose 5-phosphate (route II): step 3/3. Functionally, catalyzes the phosphorylation of ribose 1,5-bisphosphate to 5-phospho-D-ribosyl alpha-1-diphosphate (PRPP). In Chromobacterium violaceum (strain ATCC 12472 / DSM 30191 / JCM 1249 / CCUG 213 / NBRC 12614 / NCIMB 9131 / NCTC 9757 / MK), this protein is Ribose 1,5-bisphosphate phosphokinase PhnN.